The sequence spans 262 residues: Transmembrane protein 81 (262 aa).

An N-terminal signal peptide occupies residues 1 to 30 (MKAVATVFICGSLVLITYLPLVVTSPQTLA). The Extracellular segment spans residues 31 to 225 (IPEKLRQAVG…HLPGWRKKVS (195 aa)). N-linked (GlcNAc...) asparagine glycosylation is present at Asn-45. The region spanning 83 to 171 (TNWICGMLHF…VQQLKNLKLV (89 aa)) is the Ig-like domain. A disulfide bridge connects residues Cys-104 and Cys-160. Asn-211 carries an N-linked (GlcNAc...) asparagine glycan. The chain crosses the membrane as a helical span at residues 226–246 (LALGVGIAAGVVGGVLVNVAL). Over 247–262 (CRVLGGTGGNGNLSSL) the chain is Cytoplasmic.

As to quaternary structure, forms a complex with IZUMO1 and SPACA6 on spermatocyte cell membrane required for fertilization.

Its subcellular location is the cell membrane. In terms of biological role, essential fertilization factor required for male fertility. Part of a conserved trimeric sperm complex with the essential fertilization factors IZUMO1 and SPACA6 which bridges sperm and oocyte membranes during fertilization by binding to IZUMO1R/JUNO on the oocyte. This is Transmembrane protein 81 (Tmem81) from Rattus norvegicus (Rat).